Here is a 330-residue protein sequence, read N- to C-terminus: ADP-L-glycero-D-manno-heptose-6-epimerase (330 aa).

NADP(+) contacts are provided by residues 11-12 (FI), 32-33 (DN), Lys-39, Lys-54, 75-79 (EGACS), and Asn-92. Tyr-139 (proton acceptor) is an active-site residue. Lys-143 contributes to the NADP(+) binding site. Asn-168 lines the substrate pocket. Positions 169 and 177 each coordinate NADP(+). The active-site Proton acceptor is the Lys-177. Residues Arg-179, His-186, 200–203 (FGEY), Arg-213, and Tyr-292 each bind substrate.

Belongs to the NAD(P)-dependent epimerase/dehydratase family. HldD subfamily. As to quaternary structure, homopentamer. It depends on NADP(+) as a cofactor.

It catalyses the reaction ADP-D-glycero-beta-D-manno-heptose = ADP-L-glycero-beta-D-manno-heptose. Its pathway is nucleotide-sugar biosynthesis; ADP-L-glycero-beta-D-manno-heptose biosynthesis; ADP-L-glycero-beta-D-manno-heptose from D-glycero-beta-D-manno-heptose 7-phosphate: step 4/4. Functionally, catalyzes the interconversion between ADP-D-glycero-beta-D-manno-heptose and ADP-L-glycero-beta-D-manno-heptose via an epimerization at carbon 6 of the heptose. In Burkholderia pseudomallei (strain 1026b), this protein is ADP-L-glycero-D-manno-heptose-6-epimerase.